The chain runs to 100 residues: NADH-quinone oxidoreductase subunit K (100 aa).

3 helical membrane passes run 4–24, 29–49, and 60–80; these read LNYG…SLLI, IFIL…FILI, and VLYI…LAIF.

The protein belongs to the complex I subunit 4L family. As to quaternary structure, NDH-1 is composed of 13 different subunits. Subunits NuoA, H, J, K, L, M, N constitute the membrane sector of the complex.

It is found in the cell membrane. It carries out the reaction a quinone + NADH + 5 H(+)(in) = a quinol + NAD(+) + 4 H(+)(out). Its function is as follows. NDH-1 shuttles electrons from NADH, via FMN and iron-sulfur (Fe-S) centers, to quinones in the respiratory chain. The immediate electron acceptor for the enzyme in this species is believed to be ubiquinone. Couples the redox reaction to proton translocation (for every two electrons transferred, four hydrogen ions are translocated across the cytoplasmic membrane), and thus conserves the redox energy in a proton gradient. The sequence is that of NADH-quinone oxidoreductase subunit K from Buchnera aphidicola subsp. Cinara cedri (strain Cc).